A 721-amino-acid polypeptide reads, in one-letter code: Glucans biosynthesis glucosyltransferase H (721 aa).

6 consecutive transmembrane segments (helical) span residues 52-72 (CSWR…FAIF), 97-117 (NFCW…VLAS), 412-432 (SPFW…AHFI), 459-479 (FYIT…LLMF), 505-525 (ALVA…ILFG), and 570-590 (LLAW…LSGI).

Belongs to the glycosyltransferase 2 family. OpgH subfamily.

The protein resides in the cell inner membrane. It participates in glycan metabolism; osmoregulated periplasmic glucan (OPG) biosynthesis. Functionally, involved in the biosynthesis of osmoregulated periplasmic glucans (OPGs). This chain is Glucans biosynthesis glucosyltransferase H, found in Vibrio cholerae serotype O1 (strain ATCC 39541 / Classical Ogawa 395 / O395).